Reading from the N-terminus, the 218-residue chain is Large ribosomal subunit protein uL3 (218 aa).

The protein belongs to the universal ribosomal protein uL3 family. As to quaternary structure, part of the 50S ribosomal subunit. Forms a cluster with proteins L14 and L19.

One of the primary rRNA binding proteins, it binds directly near the 3'-end of the 23S rRNA, where it nucleates assembly of the 50S subunit. The protein is Large ribosomal subunit protein uL3 of Brachyspira pilosicoli (Serpulina pilosicoli).